The primary structure comprises 211 residues: MSLSDIQQAILSLITNNINADGVSPSQTEIARAFGFKGVRAVQHHLDVLEQQGMIRRIPGQARGIRLKHLTEVDEVALALQSKDVLRLPVLGRVAAGQPIGADIGEDHVVLLDRVFFSPAPDYLLRVQGDSMRDEGIFDGDLIGVHRTQDAHSGQIVVARIDDEITVKLLKISKDRIRLLPRNPDFAPIEVRSDQDFAIEGLYCGLLRPNR.

A DNA-binding region (H-T-H motif) is located at residues 27 to 47; the sequence is QTEIARAFGFKGVRAVQHHLD. Catalysis depends on for autocatalytic cleavage activity residues S131 and K168.

This sequence belongs to the peptidase S24 family. In terms of assembly, homodimer.

It carries out the reaction Hydrolysis of Ala-|-Gly bond in repressor LexA.. In terms of biological role, represses a number of genes involved in the response to DNA damage (SOS response), including recA and lexA. In the presence of single-stranded DNA, RecA interacts with LexA causing an autocatalytic cleavage which disrupts the DNA-binding part of LexA, leading to derepression of the SOS regulon and eventually DNA repair. The sequence is that of LexA repressor from Xylella fastidiosa (strain M23).